Consider the following 333-residue polypeptide: Adenosine deaminase (333 aa).

Positions 12 and 14 each coordinate Zn(2+). Substrate contacts are provided by His-14, Asp-16, and Gly-170. His-197 lines the Zn(2+) pocket. The active-site Proton donor is Glu-200. Asp-278 provides a ligand contact to Zn(2+). Asp-279 lines the substrate pocket.

The protein belongs to the metallo-dependent hydrolases superfamily. Adenosine and AMP deaminases family. Adenosine deaminase subfamily. Requires Zn(2+) as cofactor.

The enzyme catalyses adenosine + H2O + H(+) = inosine + NH4(+). It carries out the reaction 2'-deoxyadenosine + H2O + H(+) = 2'-deoxyinosine + NH4(+). Catalyzes the hydrolytic deamination of adenosine and 2-deoxyadenosine. The protein is Adenosine deaminase of Salmonella gallinarum (strain 287/91 / NCTC 13346).